Reading from the N-terminus, the 492-residue chain is Probable cytochrome P450 313a1 (492 aa).

Position 438 (C438) interacts with heme.

The protein belongs to the cytochrome P450 family. Heme is required as a cofactor.

It localises to the endoplasmic reticulum membrane. It is found in the microsome membrane. May be involved in the metabolism of insect hormones and in the breakdown of synthetic insecticides. In Drosophila melanogaster (Fruit fly), this protein is Probable cytochrome P450 313a1 (Cyp313a1).